The following is a 344-amino-acid chain: Dihydroorotate dehydrogenase (quinone) (344 aa).

FMN is bound by residues 61–65 (AGLDK) and T85. K65 contacts substrate. 110–114 (NRMGF) provides a ligand contact to substrate. 2 residues coordinate FMN: N138 and N171. N171 provides a ligand contact to substrate. S174 functions as the Nucleophile in the catalytic mechanism. N176 is a binding site for substrate. FMN contacts are provided by K216 and T244. 245–246 (NT) lines the substrate pocket. Residues G267, G296, and 317–318 (YS) each bind FMN.

This sequence belongs to the dihydroorotate dehydrogenase family. Type 2 subfamily. In terms of assembly, monomer. FMN serves as cofactor.

The protein localises to the cell membrane. It catalyses the reaction (S)-dihydroorotate + a quinone = orotate + a quinol. It functions in the pathway pyrimidine metabolism; UMP biosynthesis via de novo pathway; orotate from (S)-dihydroorotate (quinone route): step 1/1. Catalyzes the conversion of dihydroorotate to orotate with quinone as electron acceptor. The sequence is that of Dihydroorotate dehydrogenase (quinone) from Psychrobacter sp. (strain PRwf-1).